A 284-amino-acid chain; its full sequence is MAERGGESGAERGGDRGDFGRGFGGGRGGGRGRDRGPRGRGRRGGRASEETKWVPVTKLGRLVADNKITKLEQIYLHSLPVKEYQIIDHLVGPTLKDEVMKIMPVQKQTRAGQRTRFKAFVVVGDGNGHVGLGVKCSKEVATAIRGAIILAKLSVVPVRRGYWGNKIGKPHTVPCKVTGKCGSVTVRMVPAPRGSGIVAARVPKKVLQFAGIDDVFTSSRGSTKTLGNFVKATFDCLQKTYGFLTPEFWKETRFSRSPYQEHTDFLSTKAVSATKVITEGEDQA.

A compositionally biased stretch (basic and acidic residues) spans 1–19 (MAERGGESGAERGGDRGDF). Residues 1 to 51 (MAERGGESGAERGGDRGDFGRGFGGGRGGGRGRDRGPRGRGRRGGRASEET) form a disordered region. Residues 20 to 29 (GRGFGGGRGG) show a composition bias toward gly residues. The region spanning 95-158 (LKDEVMKIMP…ILAKLSVVPV (64 aa)) is the S5 DRBM domain.

It belongs to the universal ribosomal protein uS5 family.

The chain is Small ribosomal subunit protein uS5y/uS5u/uS5v (RPS2B) from Arabidopsis thaliana (Mouse-ear cress).